The following is a 536-amino-acid chain: Heparanase-like protein 3 (536 aa).

The N-terminal stretch at 1–24 is a signal peptide; that stretch reads MAYRQILAIVLFLCVFQFLDCTVS. Residues N30, N122, N176, and N191 are each glycosylated (N-linked (GlcNAc...) asparagine). The active-site Proton donor is the E202. 2 N-linked (GlcNAc...) asparagine glycosylation sites follow: N265 and N308. The active-site Nucleophile is E319. Residues N370, N427, N438, and N510 are each glycosylated (N-linked (GlcNAc...) asparagine).

This sequence belongs to the glycosyl hydrolase 79 family.

It is found in the lysosome membrane. Its subcellular location is the secreted. In terms of biological role, endoglycosidase which is a cell surface and extracellular matrix-degrading enzyme. Cleaves heparan sulfate proteoglycans (HSPGs) into heparan sulfate side chains and core proteoglycans. The protein is Heparanase-like protein 3 of Arabidopsis thaliana (Mouse-ear cress).